The primary structure comprises 343 residues: N-acetyl-gamma-glutamyl-phosphate reductase (343 aa).

Cys-149 is a catalytic residue.

The protein belongs to the NAGSA dehydrogenase family. Type 1 subfamily.

The protein resides in the cytoplasm. The catalysed reaction is N-acetyl-L-glutamate 5-semialdehyde + phosphate + NADP(+) = N-acetyl-L-glutamyl 5-phosphate + NADPH + H(+). It participates in amino-acid biosynthesis; L-arginine biosynthesis; N(2)-acetyl-L-ornithine from L-glutamate: step 3/4. Functionally, catalyzes the NADPH-dependent reduction of N-acetyl-5-glutamyl phosphate to yield N-acetyl-L-glutamate 5-semialdehyde. This Alkalilimnicola ehrlichii (strain ATCC BAA-1101 / DSM 17681 / MLHE-1) protein is N-acetyl-gamma-glutamyl-phosphate reductase.